A 189-amino-acid chain; its full sequence is Recombination protein RecR (189 aa).

A C4-type zinc finger spans residues 48 to 63 (CQTCFHLSAEPLCDIC). A Toprim domain is found at 71-165 (QLLCVVADSR…QVSRIAYGLP (95 aa)).

It belongs to the RecR family.

In terms of biological role, may play a role in DNA repair. It seems to be involved in an RecBC-independent recombinational process of DNA repair. It may act with RecF and RecO. In Prochlorococcus marinus (strain MIT 9313), this protein is Recombination protein RecR.